The chain runs to 269 residues: MTYFLNSDFSKLPLCESIIEVSRAIRQDFPSKRVIEDLKHKVEVARNYVVSENLPFLKLRKLIKLFYKNWKFECASGIYKLSDVLWLDHVLKTHKGTAVSLGIIILHIAQQLNLPLMPVIFPTQLILRADNGNGNMWLINPFNGDTLNKHVLKVWLKGNISPTAELYNNYLNKVQYFEVVRKMLDILKSALMEERNLELALNVSNVLLKIDPKNPYEIRDRGLIYSQLECDHVALTDLIYFVEHCPDDPISEILKIQIHSMEKKVITLH.

The protein belongs to the UPF0162 family.

The chain is UPF0162 protein bbp_163 from Buchnera aphidicola subsp. Baizongia pistaciae (strain Bp).